The chain runs to 128 residues: Iron-sulfur cluster insertion protein ErpA (128 aa).

Residues Cys56, Cys120, and Cys122 each contribute to the iron-sulfur cluster site.

It belongs to the HesB/IscA family. As to quaternary structure, homodimer. Requires iron-sulfur cluster as cofactor.

In terms of biological role, required for insertion of 4Fe-4S clusters for at least IspG. This Xanthomonas axonopodis pv. citri (strain 306) protein is Iron-sulfur cluster insertion protein ErpA.